The primary structure comprises 591 residues: V-type ATP synthase alpha chain (591 aa).

Residue 242–249 (GPFGAGKT) participates in ATP binding.

This sequence belongs to the ATPase alpha/beta chains family.

It carries out the reaction ATP + H2O + 4 H(+)(in) = ADP + phosphate + 5 H(+)(out). Its function is as follows. Produces ATP from ADP in the presence of a proton gradient across the membrane. The V-type alpha chain is a catalytic subunit. The polypeptide is V-type ATP synthase alpha chain (atpA) (Chlamydia pneumoniae (Chlamydophila pneumoniae)).